Reading from the N-terminus, the 610-residue chain is UvrABC system protein C (610 aa).

Positions 16–94 (HQPGVYRMYN…IKQYLPKYNV (79 aa)) constitute a GIY-YIG domain. The region spanning 204–239 (QQVLKQLIEKMEVASQQLRFEDAAKFRDQIQAIRRV) is the UVR domain.

The protein belongs to the UvrC family. As to quaternary structure, interacts with UvrB in an incision complex.

Its subcellular location is the cytoplasm. Its function is as follows. The UvrABC repair system catalyzes the recognition and processing of DNA lesions. UvrC both incises the 5' and 3' sides of the lesion. The N-terminal half is responsible for the 3' incision and the C-terminal half is responsible for the 5' incision. In Vibrio parahaemolyticus serotype O3:K6 (strain RIMD 2210633), this protein is UvrABC system protein C.